A 462-amino-acid chain; its full sequence is ESX-1 secretion system protein EccE1 (462 aa).

2 helical membrane passes run F9–L29 and W34–G54.

The protein belongs to the EccE family. As to quaternary structure, part of the ESX-1 / type VII secretion system (T7SS), which is composed of cytosolic and membrane components. The ESX-1 membrane complex is composed of EccB1, EccCa1, EccCb1, EccD1 and EccE1.

The protein resides in the cell inner membrane. Part of the ESX-1 specialized secretion system, which delivers several virulence factors to host cells during infection, including the key virulence factors EsxA (ESAT-6) and EsxB (CFP-10). The polypeptide is ESX-1 secretion system protein EccE1 (Mycobacterium tuberculosis (strain CDC 1551 / Oshkosh)).